A 335-amino-acid polypeptide reads, in one-letter code: DNA polymerase beta (335 aa).

Lys-41 is covalently cross-linked (Glycyl lysine isopeptide (Lys-Gly) (interchain with G-Cter in ubiquitin)). Lys-60 lines the K(+) pocket. Lys-60 is a binding site for Na(+). A Glycyl lysine isopeptide (Lys-Gly) (interchain with G-Cter in ubiquitin) cross-link involves residue Lys-61. K(+)-binding residues include Leu-62 and Val-65. Residues Leu-62 and Val-65 each contribute to the Na(+) site. The Nucleophile; Schiff-base intermediate with DNA; for 5'-dRP lyase activity role is filled by Lys-72. N6-acetyllysine is present on Lys-72. Lys-81 participates in a covalent cross-link: Glycyl lysine isopeptide (Lys-Gly) (interchain with G-Cter in ubiquitin). Arg-83 is subject to Omega-N-methylarginine; by PRMT6. The K(+) site is built by Thr-101, Val-103, and Ile-106. Positions 101, 103, and 106 each coordinate Na(+). Position 149 (Arg-149) interacts with a 2'-deoxyribonucleoside 5'-triphosphate. At Arg-152 the chain carries Omega-N-methylarginine; by PRMT6. A 2'-deoxyribonucleoside 5'-triphosphate is bound by residues Ser-180, Arg-183, Gly-189, and Asp-190. Positions 183–192 (RGAESSGDMD) are DNA-binding. Residues Asp-190, Asp-192, and Asp-256 each contribute to the Mg(2+) site.

This sequence belongs to the DNA polymerase type-X family. In terms of assembly, monomer. Binds single-stranded DNA (ssDNA). Interacts with APEX1, LIG1, LIG3, FEN1, PCNA and XRCC1. Interacts with HUWE1/ARF-BP1, STUB1/CHIP and USP47. Interacts with FAM168A. Mg(2+) serves as cofactor. Post-translationally, methylation by PRMT6 stimulates the polymerase activity by enhancing DNA binding and processivity. Ubiquitinated at Lys-41, Lys-61 and Lys-81: monoubiquitinated by HUWE1/ARF-BP1. Monoubiquitinated protein is then the target of STUB1/CHIP, which catalyzes polyubiquitination from monoubiquitin, leading to degradation by the proteasome. USP47 mediates the deubiquitination of monoubiquitinated protein, preventing polyubiquitination by STUB1/CHIP and its subsequent degradation.

Its subcellular location is the nucleus. The protein localises to the cytoplasm. The catalysed reaction is DNA(n) + a 2'-deoxyribonucleoside 5'-triphosphate = DNA(n+1) + diphosphate. The enzyme catalyses a 5'-end 2'-deoxyribose-2'-deoxyribonucleotide-DNA = (2E,4S)-4-hydroxypenten-2-al-5-phosphate + a 5'-end 5'-phospho-2'-deoxyribonucleoside-DNA + H(+). It carries out the reaction 2'-deoxyribonucleotide-(2'-deoxyribose 5'-phosphate)-2'-deoxyribonucleotide-DNA = a 3'-end 2'-deoxyribonucleotide-(2,3-dehydro-2,3-deoxyribose 5'-phosphate)-DNA + a 5'-end 5'-phospho-2'-deoxyribonucleoside-DNA + H(+). Repair polymerase that plays a key role in base-excision repair. During this process, the damaged base is excised by specific DNA glycosylases, the DNA backbone is nicked at the abasic site by an apurinic/apyrimidic (AP) endonuclease, and POLB removes 5'-deoxyribose-phosphate from the preincised AP site acting as a 5'-deoxyribose-phosphate lyase (5'-dRP lyase); through its DNA polymerase activity, it adds one nucleotide to the 3' end of the arising single-nucleotide gap. Conducts 'gap-filling' DNA synthesis in a stepwise distributive fashion rather than in a processive fashion as for other DNA polymerases. It is also able to cleave sugar-phosphate bonds 3' to an intact AP site, acting as an AP lyase. This is DNA polymerase beta (Polb) from Mus musculus (Mouse).